The sequence spans 144 residues: Large ribosomal subunit protein uL15 (144 aa).

The disordered stretch occupies residues 1–56; it reads MELNNLKPAEGAKHAKRRVGRGIGSGLGKTAGRGHKGQKSRSGGFHKVGFEGGQMP. Over residues 21–31 the composition is skewed to gly residues; that stretch reads RGIGSGLGKTA.

This sequence belongs to the universal ribosomal protein uL15 family. In terms of assembly, part of the 50S ribosomal subunit.

Functionally, binds to the 23S rRNA. The sequence is that of Large ribosomal subunit protein uL15 from Burkholderia mallei (strain NCTC 10247).